A 563-amino-acid polypeptide reads, in one-letter code: Putative cysteine ligase BshC (563 aa).

The stretch at 493 to 518 (KEKTYRAGRRKHDELLQQLDKAELNL) forms a coiled coil.

Belongs to the BshC family.

The protein is Putative cysteine ligase BshC of Chlorobaculum tepidum (strain ATCC 49652 / DSM 12025 / NBRC 103806 / TLS) (Chlorobium tepidum).